Here is a 103-residue protein sequence, read N- to C-terminus: Co-chaperonin GroES (103 aa).

Belongs to the GroES chaperonin family. Heptamer of 7 subunits arranged in a ring. Interacts with the chaperonin GroEL.

It localises to the cytoplasm. Functionally, together with the chaperonin GroEL, plays an essential role in assisting protein folding. The GroEL-GroES system forms a nano-cage that allows encapsulation of the non-native substrate proteins and provides a physical environment optimized to promote and accelerate protein folding. GroES binds to the apical surface of the GroEL ring, thereby capping the opening of the GroEL channel. The chain is Co-chaperonin GroES from Synechococcus sp. (strain CC9605).